Reading from the N-terminus, the 805-residue chain is Phenylalanine--tRNA ligase beta subunit (805 aa).

The tRNA-binding domain occupies 39–148; the sequence is APPFTGVVVA…AALRPGTDIR (110 aa). A B5 domain is found at 399–474; that stretch reads PVREPVRMRL…RVYGFERIPD (76 aa). 4 residues coordinate Mg(2+): aspartate 452, aspartate 458, glutamate 461, and glutamate 462. The FDX-ACB domain occupies 703 to 804; it reads SRQPAVVRDL…LVAAHNARQR (102 aa).

Belongs to the phenylalanyl-tRNA synthetase beta subunit family. Type 1 subfamily. As to quaternary structure, tetramer of two alpha and two beta subunits. Requires Mg(2+) as cofactor.

It is found in the cytoplasm. The catalysed reaction is tRNA(Phe) + L-phenylalanine + ATP = L-phenylalanyl-tRNA(Phe) + AMP + diphosphate + H(+). The polypeptide is Phenylalanine--tRNA ligase beta subunit (Bordetella bronchiseptica (strain ATCC BAA-588 / NCTC 13252 / RB50) (Alcaligenes bronchisepticus)).